An 869-amino-acid chain; its full sequence is Facilitated trehalose transporter Tret1 (869 aa).

Disordered stretches follow at residues 1 to 214 (MSGR…QKAT) and 258 to 315 (KESS…LIHR). Residues 1–404 (MSGRDNRGAG…VYRPTTNPIY (404 aa)) are Cytoplasmic-facing. Residues 25-43 (KLKEKLTRAGDDQGYHRVE) are compositionally biased toward basic and acidic residues. Composition is skewed to low complexity over residues 44 to 57 (SNLS…SLDT), 79 to 92 (PQQQ…QQLR), and 118 to 127 (PFQQQQQRTP). 2 stretches are compositionally biased toward basic and acidic residues: residues 147–156 (EIREHRDRQQ) and 258–291 (KESS…KLDK). A phosphoserine mark is found at Ser-260, Ser-261, Ser-262, Ser-332, and Ser-334. The disordered stretch occupies residues 336–368 (EDFHTSRQHFQQQRSISTDSRKSRRPYEMDEMG). Polar residues predominate over residues 343–353 (QHFQQQRSIST). Positions 354-368 (DSRKSRRPYEMDEMG) are enriched in basic and acidic residues. Residues 405–425 (IWTQVLAALSVSLGSLVVGFV) form a helical membrane-spanning segment. Residues 426-452 (SAYTSPALVSMTNRNMTSFEVTPQAAS) are Extracellular-facing. Asn-440 carries N-linked (GlcNAc...) asparagine glycosylation. The chain crosses the membrane as a helical span at residues 453–473 (WVGGIMPLAGLAGGIAGGPFI). At 474–485 (EYLGRRNTILAT) the chain is on the cytoplasmic side. The chain crosses the membrane as a helical span at residues 486–506 (AIPFIVSSLLIACAVNVAMVL). Topologically, residues 507–509 (AGR) are extracellular. The helical transmembrane segment at 510-530 (FLAGFCVGIASLSLPVYLGET) threads the bilayer. Over 531 to 536 (VQPEVR) the chain is Cytoplasmic. The chain crosses the membrane as a helical span at residues 537–557 (GTLGLLPTAFGNIGILLCFVA). Over 558 to 564 (GTYMDWS) the chain is Extracellular. A helical membrane pass occupies residues 565 to 585 (MLAFLGAALPVPFLILMFLIP). The Cytoplasmic portion of the chain corresponds to 586–654 (ETPRWFVSRG…NLKPLSISLG (69 aa)). A helical transmembrane segment spans residues 655–675 (LMFFQQLSGINAVIFYTVSIF). The Extracellular segment spans residues 676–685 (KDAGSTIDGN). Residues 686–706 (LCTIIVGIVNFMATFIATLLI) traverse the membrane as a helical segment. Residues 707–712 (DRAGRK) are Cytoplasmic-facing. The chain crosses the membrane as a helical span at residues 713–733 (ILLYVSNIAMIITLFVLGGFF). Residues 734 to 752 (YCKSHGQDVSQLGWLPLSC) lie on the Extracellular side of the membrane. The chain crosses the membrane as a helical span at residues 753 to 773 (FVIYILGFSLGFGPIPWLMMG). The Cytoplasmic portion of the chain corresponds to 774 to 779 (EILPSK). Residues 780–800 (IRGSAASVATAFNWSCTFVVT) form a helical membrane-spanning segment. Over 801-813 (KTFQDMIDFMGAH) the chain is Extracellular. Residues 814 to 834 (GAFWLFGSICFIGLFFVILYV) form a helical membrane-spanning segment. The Cytoplasmic portion of the chain corresponds to 835–869 (PETQGKTLEDIERKMMGRVRRMSSVANMKPLAFNM). Residues Ser-857 and Ser-858 each carry the phosphoserine modification.

This sequence belongs to the major facilitator superfamily. Sugar transporter (TC 2.A.1.1) family. Trehalose transporter subfamily.

It localises to the cell membrane. Its function is as follows. Low-capacity facilitative transporter for trehalose. Does not transport maltose, sucrose or lactose. Mediates the bidirectional transfer of trehalose. Responsible for the transport of trehalose synthesized in the fat body and the incorporation of trehalose into other tissues that require a carbon source, thereby regulating trehalose levels in the hemolymph. The polypeptide is Facilitated trehalose transporter Tret1 (Drosophila persimilis (Fruit fly)).